The following is a 114-amino-acid chain: Thioredoxin H1 (114 aa).

Position 2 is an N-acetylalanine (A2). The region spanning A2–A114 is the Thioredoxin domain. Residues C40 and C43 each act as nucleophile in the active site. A disulfide bridge links C40 with C43.

It belongs to the thioredoxin family. Plant H-type subfamily. In terms of assembly, interacts with FBA6. Interacts with MDH1.

The protein resides in the cytoplasm. In terms of biological role, thiol-disulfide oxidoreductase involved in the redox regulation of a number of cytosolic enzymes. Activates the cytosolic malate dehydrogenase (MDH) probably by reducing an interchain disulfide bond of the inactive MDH homodimer. Possesses insulin disulfide bonds reducing activity. The protein is Thioredoxin H1 (TRX1) of Arabidopsis thaliana (Mouse-ear cress).